Here is a 134-residue protein sequence, read N- to C-terminus: Small ribosomal subunit protein uS8 (134 aa).

This sequence belongs to the universal ribosomal protein uS8 family. As to quaternary structure, part of the 30S ribosomal subunit. Contacts proteins S5 and S12.

Its function is as follows. One of the primary rRNA binding proteins, it binds directly to 16S rRNA central domain where it helps coordinate assembly of the platform of the 30S subunit. This chain is Small ribosomal subunit protein uS8, found in Synechococcus sp. (strain JA-3-3Ab) (Cyanobacteria bacterium Yellowstone A-Prime).